The following is a 1011-amino-acid chain: Histone deacetylase 9 (1011 aa).

At S22 the chain carries Phosphoserine. The interval 23 to 27 (PLDLR) is interaction with CTBP1. Disordered stretches follow at residues 110-139 (RQEQEVERHRREQQLPPLRGKDRGRERAVA), 183-249 (TSLD…KDGN), and 262-304 (TESS…EQMV). Residues 136–154 (RAVASTEVKQKLQEFLLSK) form an interaction with MEF2 region. Residues 175–343 (LWYTAAHHTS…LPAVPSQLNA (169 aa)) are interaction with MAPK10. The span at 185–199 (LDQSSPPLSGTSPSY) shows a compositional bias: polar residues. A compositionally biased stretch (basic and acidic residues) spans 208–219 (DAKDDFPLRKTA). The interval 218–261 (TASEPNLKVRSRLKQKVAERRSSPLLRRKDGNVVTSFKKRMFEV) is interaction with ETV6. 2 positions are modified to phosphoserine: S220 and S240. Residues 233–248 (KVAERRSSPLLRRKDG) are compositionally biased toward basic and acidic residues. Over residues 262–285 (TESSVSSSSPGSGPSSPNNGPTGS) the composition is skewed to low complexity. S451 is subject to Phosphoserine. Residues 494-536 (QLKQPGSHLEEAEEELQGDQAMQEDRAPSSGNSTRSDSSACVD) are disordered. The segment covering 522–532 (SSGNSTRSDSS) has biased composition (polar residues). The residue at position 554 (S554) is a Phosphoserine. The interval 631–978 (SATGIAYDPL…VNALLGNELE (348 aa)) is histone deacetylase. Zn(2+) is bound by residues C646, C648, H654, and C731. H783 is an active-site residue.

The protein belongs to the histone deacetylase family. HD type 2 subfamily. Homodimer. Interacts with CTBP1. The phosphorylated form interacts with 14-3-3. Interacts with HDAC1 and HDAC3, and probably with HDAC4 and HDAC5. Interacts with MEF2, MAPK10, ETV6, NCOR1 and BCL6. Interacts with FOXP3 in the absence of T-cell stimulation. Post-translationally, phosphorylated on Ser-220 and Ser-450; which promotes 14-3-3-binding, impairs interaction with MEF2, and antagonizes antimyogenic activity. Phosphorylated on Ser-240; which impairs nuclear accumulation. Isoform 7 is phosphorylated on Tyr-1010. Phosphorylated by the PKC kinases PKN1 and PKN2, impairing nuclear import. Sumoylated. In terms of tissue distribution, broadly expressed, with highest levels in brain, heart, muscle and testis. Isoform 3 is present in human bladder carcinoma cells (at protein level).

Its subcellular location is the nucleus. It catalyses the reaction N(6)-acetyl-L-lysyl-[histone] + H2O = L-lysyl-[histone] + acetate. Inhibited by Trichostatin A (TSA) and suberoylanilide hydroxamic acid. Its function is as follows. Responsible for the deacetylation of lysine residues on the N-terminal part of the core histones (H2A, H2B, H3 and H4). Histone deacetylation gives a tag for epigenetic repression and plays an important role in transcriptional regulation, cell cycle progression and developmental events. Represses MEF2-dependent transcription. Functionally, isoform 3 lacks active site residues and therefore is catalytically inactive. Represses MEF2-dependent transcription by recruiting HDAC1 and/or HDAC3. Seems to inhibit skeletal myogenesis and to be involved in heart development. Protects neurons from apoptosis, both by inhibiting JUN phosphorylation by MAPK10 and by repressing JUN transcription via HDAC1 recruitment to JUN promoter. The chain is Histone deacetylase 9 (HDAC9) from Homo sapiens (Human).